Consider the following 478-residue polypeptide: Sorting nexin-4 (478 aa).

The segment covering 1-10 has biased composition (basic and acidic residues); that stretch reads MAVIDQHQDD. The disordered stretch occupies residues 1 to 56; it reads MAVIDQHQDDFSNVSWNTDEHTAAESSSSVTATEFDDTERNGHNAYESDAPGSDGQ. The segment covering 24–33 has biased composition (low complexity); the sequence is AESSSSVTAT. Residues 58-180 form the PX domain; that stretch reads VLDCVVSEPL…IFLESPDWNA (123 aa). Positions 101, 103, 127, and 146 each coordinate a 1,2-diacyl-sn-glycero-3-phospho-(1D-myo-inositol-3-phosphate). Positions 459–478 are disordered; the sequence is EGVSGTRSTGVEPPGRRLAD.

Belongs to the sorting nexin family. In terms of assembly, interacts with the mitochondrial prohibitin complex subunits PHB1 and PHB2; the interaction is direct and plays a role in mitophagy.

It localises to the cytoplasm. It is found in the cytosol. The protein localises to the preautophagosomal structure membrane. The protein resides in the endosome membrane. Its subcellular location is the mitochondrion membrane. It localises to the lipid droplet. Sorting nexin, involved in the separation or division of vacuoles throughout the entire life cycle of the cells. Involved in retrieval of late-Golgi SNAREs from post-Golgi endosomes to the trans-Golgi network, for cytoplasm to vacuole transport (Cvt), and autophagy of large cargos including mitophagy, pexophagy and glycophagy. Required for the switch to necrotrophic growth. The sequence is that of Sorting nexin-4 from Colletotrichum higginsianum (strain IMI 349063) (Crucifer anthracnose fungus).